The following is an 88-amino-acid chain: Small ribosomal subunit protein bS20 (88 aa).

Residues 1–11 (MANIKSSEKDI) are compositionally biased toward basic and acidic residues. Disordered stretches follow at residues 1-31 (MANIKSSEKDIRRTKRRNAANSQNRSRLRTQ) and 69-88 (SKNADRKKSRMAKRLNSSAA).

The protein belongs to the bacterial ribosomal protein bS20 family.

Functionally, binds directly to 16S ribosomal RNA. This Leptospira interrogans serogroup Icterohaemorrhagiae serovar copenhageni (strain Fiocruz L1-130) protein is Small ribosomal subunit protein bS20.